The chain runs to 224 residues: PKHD-type hydroxylase Shewmr7_0698 (224 aa).

The region spanning 78–176 (QFYPPLFNRY…RTAAFMWLQS (99 aa)) is the Fe2OG dioxygenase domain. The Fe cation site is built by H96, D98, and H157. R167 lines the 2-oxoglutarate pocket.

The cofactor is Fe(2+). Requires L-ascorbate as cofactor.

This Shewanella sp. (strain MR-7) protein is PKHD-type hydroxylase Shewmr7_0698.